The chain runs to 524 residues: Na(+)/H(+) antiporter NhaB (524 aa).

A run of 12 helical transmembrane segments spans residues 23-43 (IAIL…PFYA), 44-64 (GWLL…CYPL), 97-117 (LLLI…LFVF), 120-140 (LLLN…AAAF), 144-164 (FLDA…FYGI), 203-223 (LLMH…VGEP), 236-256 (FVSF…CGIL), 304-324 (ALVG…VGLI), 354-374 (FTAL…QHLF), 392-412 (LFYL…VGTV), 448-468 (ATPN…APLI), and 476-496 (VWMA…CVIF).

Belongs to the NhaB Na(+)/H(+) (TC 2.A.34) antiporter family.

Its subcellular location is the cell inner membrane. The catalysed reaction is 2 Na(+)(in) + 3 H(+)(out) = 2 Na(+)(out) + 3 H(+)(in). Na(+)/H(+) antiporter that extrudes sodium in exchange for external protons. The sequence is that of Na(+)/H(+) antiporter NhaB from Edwardsiella ictaluri (strain 93-146).